The sequence spans 520 residues: Nucleobase-ascorbate transporter 1 (520 aa).

The next 12 helical transmembrane spans lie at 36 to 56 (YILM…AMGG), 64 to 84 (VIQT…LFGT), 86 to 106 (LPAV…IIND), 129 to 149 (ALIV…WGLF), 150 to 170 (SRFF…LGMF), 174 to 194 (FPQL…VIGL), 213 to 233 (FPIL…TASG), 279 to 299 (FAMM…YIAA), 362 to 382 (GFMI…SIPV), 384 to 404 (IYAA…LSFL), 415 to 435 (LMIT…FAQY), and 453 to 473 (AFLN…AVFM).

This sequence belongs to the nucleobase:cation symporter-2 (NCS2) (TC 2.A.40) family. Expressed in cotyledons 4 days after imbibition (DAI). Expressed in the minor and major veins of cotyledons and leaves, in the shoot apex and pedicels. Expressed in the root meristems, root tips and lateral root primordia.

It is found in the membrane. The polypeptide is Nucleobase-ascorbate transporter 1 (NAT1) (Arabidopsis thaliana (Mouse-ear cress)).